Reading from the N-terminus, the 317-residue chain is tRNA uridine(34) hydroxylase (317 aa).

The Rhodanese domain occupies 123-217; it reads EDDDTIVIDA…YGKDPETKGE (95 aa). Cys-177 (cysteine persulfide intermediate) is an active-site residue.

The protein belongs to the TrhO family.

The catalysed reaction is uridine(34) in tRNA + AH2 + O2 = 5-hydroxyuridine(34) in tRNA + A + H2O. Catalyzes oxygen-dependent 5-hydroxyuridine (ho5U) modification at position 34 in tRNAs. This chain is tRNA uridine(34) hydroxylase, found in Staphylococcus carnosus (strain TM300).